The chain runs to 185 residues: UPF0301 protein HDEF_0602 (185 aa).

This sequence belongs to the UPF0301 (AlgH) family.

In Hamiltonella defensa subsp. Acyrthosiphon pisum (strain 5AT), this protein is UPF0301 protein HDEF_0602.